A 209-amino-acid polypeptide reads, in one-letter code: Thiamine-phosphate synthase (209 aa).

Residues 36–40 (QYRDK) and N68 each bind 4-amino-2-methyl-5-(diphosphooxymethyl)pyrimidine. 2 residues coordinate Mg(2+): D69 and D87. T106 lines the 4-amino-2-methyl-5-(diphosphooxymethyl)pyrimidine pocket. A 2-[(2R,5Z)-2-carboxy-4-methylthiazol-5(2H)-ylidene]ethyl phosphate-binding site is contributed by 133–135 (SST). K136 contributes to the 4-amino-2-methyl-5-(diphosphooxymethyl)pyrimidine binding site. Residue G163 coordinates 2-[(2R,5Z)-2-carboxy-4-methylthiazol-5(2H)-ylidene]ethyl phosphate.

Belongs to the thiamine-phosphate synthase family. It depends on Mg(2+) as a cofactor.

It carries out the reaction 2-[(2R,5Z)-2-carboxy-4-methylthiazol-5(2H)-ylidene]ethyl phosphate + 4-amino-2-methyl-5-(diphosphooxymethyl)pyrimidine + 2 H(+) = thiamine phosphate + CO2 + diphosphate. The enzyme catalyses 2-(2-carboxy-4-methylthiazol-5-yl)ethyl phosphate + 4-amino-2-methyl-5-(diphosphooxymethyl)pyrimidine + 2 H(+) = thiamine phosphate + CO2 + diphosphate. It catalyses the reaction 4-methyl-5-(2-phosphooxyethyl)-thiazole + 4-amino-2-methyl-5-(diphosphooxymethyl)pyrimidine + H(+) = thiamine phosphate + diphosphate. Its pathway is cofactor biosynthesis; thiamine diphosphate biosynthesis; thiamine phosphate from 4-amino-2-methyl-5-diphosphomethylpyrimidine and 4-methyl-5-(2-phosphoethyl)-thiazole: step 1/1. Condenses 4-methyl-5-(beta-hydroxyethyl)thiazole monophosphate (THZ-P) and 2-methyl-4-amino-5-hydroxymethyl pyrimidine pyrophosphate (HMP-PP) to form thiamine monophosphate (TMP). This Azotobacter vinelandii (strain DJ / ATCC BAA-1303) protein is Thiamine-phosphate synthase.